Here is a 344-residue protein sequence, read N- to C-terminus: Uroporphyrinogen decarboxylase (344 aa).

Residues 27 to 31 (RQAGR), phenylalanine 46, aspartate 77, tyrosine 153, threonine 208, and histidine 324 each bind substrate.

This sequence belongs to the uroporphyrinogen decarboxylase family. Homodimer.

It is found in the cytoplasm. It catalyses the reaction uroporphyrinogen III + 4 H(+) = coproporphyrinogen III + 4 CO2. It functions in the pathway porphyrin-containing compound metabolism; protoporphyrin-IX biosynthesis; coproporphyrinogen-III from 5-aminolevulinate: step 4/4. Its function is as follows. Catalyzes the decarboxylation of four acetate groups of uroporphyrinogen-III to yield coproporphyrinogen-III. The polypeptide is Uroporphyrinogen decarboxylase (Bradyrhizobium diazoefficiens (strain JCM 10833 / BCRC 13528 / IAM 13628 / NBRC 14792 / USDA 110)).